The chain runs to 335 residues: Trans-3-hydroxy-L-proline dehydratase (335 aa).

Cys-91 acts as the Proton acceptor in catalysis. Substrate-binding positions include 92–93 (GH), His-222, and 256–257 (GS).

The protein belongs to the proline racemase family. Homodimer.

It catalyses the reaction trans-3-hydroxy-L-proline = 1-pyrroline-2-carboxylate + H2O. Functionally, catalyzes the dehydration of trans-3-hydroxy-L-proline (t3LHyp) to Delta(1)-pyrroline-2-carboxylate (Pyr2C). Does not possess neither proline racemase nor 4-hydroxyproline 2-epimerase activities. In Burkholderia cenocepacia (strain HI2424), this protein is Trans-3-hydroxy-L-proline dehydratase.